Here is an 82-residue protein sequence, read N- to C-terminus: Sec-independent protein translocase protein TatA (82 aa).

A helical membrane pass occupies residues 1 to 21 (MGLSTTHLIIFLVIIVLIFGT).

This sequence belongs to the TatA/E family. In terms of assembly, the Tat system comprises two distinct complexes: a TatABC complex, containing multiple copies of TatA, TatB and TatC subunits, and a separate TatA complex, containing only TatA subunits. Substrates initially bind to the TatABC complex, which probably triggers association of the separate TatA complex to form the active translocon.

The protein resides in the cell inner membrane. Its function is as follows. Part of the twin-arginine translocation (Tat) system that transports large folded proteins containing a characteristic twin-arginine motif in their signal peptide across membranes. TatA could form the protein-conducting channel of the Tat system. The sequence is that of Sec-independent protein translocase protein TatA from Leptothrix cholodnii (strain ATCC 51168 / LMG 8142 / SP-6) (Leptothrix discophora (strain SP-6)).